Here is a 272-residue protein sequence, read N- to C-terminus: Putative esterase/lipase 3 (272 aa).

Residue His-34 is part of the active site. The active-site Charge relay system is Ser-100.

Belongs to the lipase/esterase LIP3/BchO family.

The polypeptide is Putative esterase/lipase 3 (Mycoplasma pneumoniae (strain ATCC 29342 / M129 / Subtype 1) (Mycoplasmoides pneumoniae)).